A 252-amino-acid chain; its full sequence is 3-dehydroquinate dehydratase (252 aa).

3-dehydroquinate-binding positions include Ser-21, 46–48 (EWR), and Arg-82. His-143 serves as the catalytic Proton donor/acceptor. Catalysis depends on Lys-170, which acts as the Schiff-base intermediate with substrate. 3-dehydroquinate is bound by residues Arg-213, Ser-232, and Gln-236.

Belongs to the type-I 3-dehydroquinase family. As to quaternary structure, homodimer.

The enzyme catalyses 3-dehydroquinate = 3-dehydroshikimate + H2O. The protein operates within metabolic intermediate biosynthesis; chorismate biosynthesis; chorismate from D-erythrose 4-phosphate and phosphoenolpyruvate: step 3/7. In terms of biological role, involved in the third step of the chorismate pathway, which leads to the biosynthesis of aromatic amino acids. Catalyzes the cis-dehydration of 3-dehydroquinate (DHQ) and introduces the first double bond of the aromatic ring to yield 3-dehydroshikimate. The polypeptide is 3-dehydroquinate dehydratase (Escherichia coli O8 (strain IAI1)).